We begin with the raw amino-acid sequence, 2452 residues long: Lovastatin diketide synthase lovF (2452 aa).

The 372-residue stretch at 10–381 folds into the Ketosynthase family 3 (KS3) domain; the sequence is PAPIAVVGMG…GANAHAIVER (372 aa). Residues cysteine 173, histidine 308, and histidine 343 each act as for beta-ketoacyl synthase activity in the active site. Residues 496-790 form a malonyl-CoA:ACP transacylase (MAT) domain region; it reads VFTGQGAQWF…PYLSCLSRGK (295 aa). Residue serine 555 is the For malonyltransferase activity of the active site. An N-terminal hotdog fold region spans residues 861-998; sequence HDLIGLQEPL…GLVRVDMDQP (138 aa). Residues 861–1166 form a dehydratase (DH) domain region; the sequence is HDLIGLQEPL…LEGLVFQSLG (306 aa). Residues 861-1171 enclose the PKS/mFAS DH domain; that stretch reads HDLIGLQEPL…FQSLGASLGT (311 aa). Histidine 893 serves as the catalytic Proton acceptor; for dehydratase activity. The segment at 997–1017 is disordered; that stretch reads QPASSLSNPQRADPRPWSRKT. A C-terminal hotdog fold region spans residues 1012 to 1171; it reads PWSRKTAPQD…FQSLGASLGT (160 aa). Aspartate 1079 functions as the Proton donor; for dehydratase activity in the catalytic mechanism. Positions 1343 to 1528 are methyltransferase (CMet) domain; it reads ELVRLCCHKN…RDCDSDEFYM (186 aa). The segment at 1745–2064 is enoylreductase (ER) domain; sequence GLLDSLYFRK…SGQHVGKIVV (320 aa). Positions 2088–2260 are ketoreductase (KR) domain; it reads SYLVAGGLGG…AVTIDLGMVQ (173 aa). A Carrier domain is found at 2373–2450; that stretch reads ASIAVIMEAM…KVAEVVLQRY (78 aa). Serine 2410 is modified (O-(pantetheine 4'-phosphoryl)serine).

As to quaternary structure, interacts with LovD. The cofactor is pantetheine 4'-phosphate.

The enzyme catalyses holo-[2-methylbutanoate polyketide synthase] + 2 malonyl-CoA + S-adenosyl-L-methionine + 2 NADPH + 3 H(+) = (S)-2-methylbutanoyl-[2-methylbutanoate polyketide synthase] + S-adenosyl-L-homocysteine + 2 CO2 + 2 NADP(+) + 2 CoA + H2O. It participates in polyketide biosynthesis; lovastatin biosynthesis. Its function is as follows. Lovastatin diketide synthase; part of the gene cluster that mediates the biosynthesis of lovastatin (also known as mevinolin, mevacor or monacolin K), a hypolipidemic inhibitor of (3S)-hydroxymethylglutaryl-coenzyme A (HMG-CoA) reductase (HMGR). The first step in the biosynthesis of lovastatin is the production of dihydromonacolin L acid by the lovastatin nonaketide synthase lovB and the trans-acting enoyl reductase lovC via condensation of one acetyl-CoA unit and 8 malonyl-CoA units. Dihydromonacolin L acid is released from lovB by the thioesterase lovG. Next, dihydromonacolin L acid is oxidized by the dihydromonacolin L monooxygenase lovA twice to form monacolin J acid. The 2-methylbutyrate moiety of lovastatin is synthesized by the lovastatin diketide synthase lovF via condensation of one acetyl-CoA unit and one malonyl-CoA unit. Finally, the covalent attachment of this moiety to monacolin J acid is catalyzed by the transesterase lovD to yield lovastatin. LovD has broad substrate specificity and can also convert monacolin J to simvastatin using alpha-dimethylbutanoyl-S-methyl-3-mercaptopropionate (DMB-S-MMP) as the thioester acyl donor, and can also catalyze the reverse reaction and function as hydrolase in vitro. LovD has much higher activity with LovF-bound 2-methylbutanoate than with free diketide substrates. This Aspergillus terreus (strain NIH 2624 / FGSC A1156) protein is Lovastatin diketide synthase lovF.